The primary structure comprises 205 residues: MTTDFLFPKIADCSYVSCYCEENVWKLCEQVKRTRPEELAKCYAVFVSNEGRTVPLWRQKAGRGDDQVVIWDYHVFFMHNPLPNRCLVFDLDTTLPFPTYFHKYVTETFRSDLALRPEHHRFFRVIPADTYLIEFSSDRRHMRRPDGSWIKPPPSYPPILSNTNTHCLGDFICMSAGKGPGAVYSLSEFVHNFYKQPNMVAQNNK.

Active-site residues include cysteine 20, histidine 74, and aspartate 90.

Belongs to the NTAQ1 family. In terms of assembly, monomer.

The catalysed reaction is N-terminal L-glutaminyl-[protein] + H2O = N-terminal L-glutamyl-[protein] + NH4(+). Its function is as follows. Mediates the side-chain deamidation of N-terminal glutamine residues to glutamate, an important step in N-end rule pathway of protein degradation. Conversion of the resulting N-terminal glutamine to glutamate renders the protein susceptible to arginylation, polyubiquitination and degradation as specified by the N-end rule. Does not act on substrates with internal or C-terminal glutamine and does not act on non-glutamine residues in any position. This is Protein N-terminal glutamine amidohydrolase (tun) from Drosophila willistoni (Fruit fly).